Here is a 109-residue protein sequence, read N- to C-terminus: Small serum protein 2 (109 aa).

The signal sequence occupies residues 1–19 (MRVFFSLIIFSFMLATCQG). Intrachain disulfides connect Cys-21/Cys-72, Cys-39/Cys-64, Cys-59/Cys-93, Cys-62/Cys-71, and Cys-84/Cys-107.

In terms of assembly, forms a stable, non-covalent complex with serotriflin.

The protein resides in the secreted. Functionally, may serve as a self-defense protein against the toxic effects of the snake venom during accidental envenomation. Does not show inhibitory activity towards brevilysin H6. The polypeptide is Small serum protein 2 (Protobothrops flavoviridis (Habu)).